A 218-amino-acid chain; its full sequence is UPF0711 protein C18orf21 homolog (218 aa).

Residue Ser126 is modified to Phosphoserine. Residues Ala130–Ala146 are compositionally biased toward low complexity. Positions Ala130–Ser192 are disordered. At Thr140 the chain carries Phosphothreonine. Residues Gly147–His156 show a composition bias toward polar residues. Over residues Arg161–Ser172 the composition is skewed to low complexity. A compositionally biased stretch (polar residues) spans Gly173–Asn183.

The protein belongs to the UPF0711 family.

In Rattus norvegicus (Rat), this protein is UPF0711 protein C18orf21 homolog.